A 177-amino-acid chain; its full sequence is Large ribosomal subunit protein uL6 (177 aa).

The protein belongs to the universal ribosomal protein uL6 family. As to quaternary structure, part of the 50S ribosomal subunit.

Its function is as follows. This protein binds to the 23S rRNA, and is important in its secondary structure. It is located near the subunit interface in the base of the L7/L12 stalk, and near the tRNA binding site of the peptidyltransferase center. In Proteus mirabilis (strain HI4320), this protein is Large ribosomal subunit protein uL6.